A 518-amino-acid chain; its full sequence is Sensor protein kinase HptS (518 aa).

2 helical membrane passes run 20-40 (IFPV…IYIW) and 222-242 (GITL…FGFI). The 217-residue stretch at 297–513 (EQLIHSIEHT…LICYKIPLSR (217 aa)) folds into the Histidine kinase domain. A Phosphohistidine; by autocatalysis modification is found at H325.

Post-translationally, autophosphorylated.

The protein localises to the cell membrane. The catalysed reaction is ATP + protein L-histidine = ADP + protein N-phospho-L-histidine.. In terms of biological role, member of the two-component regulatory system HptS/HptR that regulates genes involved in hexose phosphate transport system in response to changes in extracellular phosphate sources. May act as a sensor protein kinase which is autophosphorylated at a histidine residue and transfers its phosphate group to the conserved aspartic acid residue in the regulatory domain of HptS. In turn, HptS antagonizes CcpA-dependent transcription of a subset of CcpA-regulated genes involved in antibiotic susceptibility. This chain is Sensor protein kinase HptS (hptS), found in Staphylococcus aureus (strain Mu50 / ATCC 700699).